The following is a 361-amino-acid chain: MSLWVVKVGTSLLRGNEKQSTAEVIESYSACLSASLKRGDHVVLVTSGAVGLGCNRLGLSQRPVDVVALQGTAAIGQGQLMALYEAAMSRRGHTVAQVLLTRSDLGSRQRYRNASSTLKQLLDWGVLPVVNENDALSPEELRYGDNDTLSALVATAVEADQLIMLTDVDRLYSSDPRINASAEPISDVYHPHELTALEVAAGEGGAWGTGGMTTKLAAARIATASGITVLLADGRDPQVLDGLLQGRRSGTVFHPHPQPLGNRKSWLAHALKPLGTLQLDEGACDALQHRGASLLLVGVKEVEGNFEANQPVRLINPEGNELARGLCSLSSKELREAIETQMSTNRSPVVVHRDVLVLRNA.

Lys7 provides a ligand contact to ATP. Ser47, Asp134, and Asn146 together coordinate substrate. ATP is bound by residues 166–167 and 209–215; these read TD and TGGMTTK. Positions 274-345 constitute a PUA domain; that stretch reads LGTLQLDEGA…EAIETQMSTN (72 aa).

The protein belongs to the glutamate 5-kinase family.

It is found in the cytoplasm. The catalysed reaction is L-glutamate + ATP = L-glutamyl 5-phosphate + ADP. The protein operates within amino-acid biosynthesis; L-proline biosynthesis; L-glutamate 5-semialdehyde from L-glutamate: step 1/2. Catalyzes the transfer of a phosphate group to glutamate to form L-glutamate 5-phosphate. In Prochlorococcus marinus (strain MIT 9313), this protein is Glutamate 5-kinase.